Here is a 328-residue protein sequence, read N- to C-terminus: DNA-directed RNA polymerase subunit alpha (328 aa).

Residues 1–233 are alpha N-terminal domain (alpha-NTD); that stretch reads MHNSATEFLK…EQLEAFIDLR (233 aa). An alpha C-terminal domain (alpha-CTD) region spans residues 247–328; it reads FDPVLLRPVD…WPPVSILKND (82 aa).

The protein belongs to the RNA polymerase alpha chain family. In terms of assembly, homodimer. The RNAP catalytic core consists of 2 alpha, 1 beta, 1 beta' and 1 omega subunit. When a sigma factor is associated with the core the holoenzyme is formed, which can initiate transcription.

It carries out the reaction RNA(n) + a ribonucleoside 5'-triphosphate = RNA(n+1) + diphosphate. Its function is as follows. DNA-dependent RNA polymerase catalyzes the transcription of DNA into RNA using the four ribonucleoside triphosphates as substrates. The sequence is that of DNA-directed RNA polymerase subunit alpha from Wigglesworthia glossinidia brevipalpis.